A 386-amino-acid polypeptide reads, in one-letter code: Formate-dependent phosphoribosylglycinamide formyltransferase (386 aa).

N(1)-(5-phospho-beta-D-ribosyl)glycinamide-binding positions include 15 to 16 (EL) and Glu-75. Residues Arg-107, Lys-148, 153-158 (SSGKGQ), 188-191 (EQFI), and Glu-196 contribute to the ATP site. In terms of domain architecture, ATP-grasp spans 112–301 (ALAAQQLNLQ…EFELHLRAIV (190 aa)). The Mg(2+) site is built by Glu-260 and Glu-272. Residues Asp-279, Lys-349, and 356 to 357 (RR) each bind N(1)-(5-phospho-beta-D-ribosyl)glycinamide.

Belongs to the PurK/PurT family. Homodimer.

The catalysed reaction is N(1)-(5-phospho-beta-D-ribosyl)glycinamide + formate + ATP = N(2)-formyl-N(1)-(5-phospho-beta-D-ribosyl)glycinamide + ADP + phosphate + H(+). The protein operates within purine metabolism; IMP biosynthesis via de novo pathway; N(2)-formyl-N(1)-(5-phospho-D-ribosyl)glycinamide from N(1)-(5-phospho-D-ribosyl)glycinamide (formate route): step 1/1. Its function is as follows. Involved in the de novo purine biosynthesis. Catalyzes the transfer of formate to 5-phospho-ribosyl-glycinamide (GAR), producing 5-phospho-ribosyl-N-formylglycinamide (FGAR). Formate is provided by PurU via hydrolysis of 10-formyl-tetrahydrofolate. This chain is Formate-dependent phosphoribosylglycinamide formyltransferase, found in Francisella tularensis subsp. tularensis (strain WY96-3418).